A 219-amino-acid polypeptide reads, in one-letter code: Probable nicotinate-nucleotide adenylyltransferase (219 aa).

It belongs to the NadD family.

The enzyme catalyses nicotinate beta-D-ribonucleotide + ATP + H(+) = deamido-NAD(+) + diphosphate. The protein operates within cofactor biosynthesis; NAD(+) biosynthesis; deamido-NAD(+) from nicotinate D-ribonucleotide: step 1/1. In terms of biological role, catalyzes the reversible adenylation of nicotinate mononucleotide (NaMN) to nicotinic acid adenine dinucleotide (NaAD). The chain is Probable nicotinate-nucleotide adenylyltransferase from Chromohalobacter salexigens (strain ATCC BAA-138 / DSM 3043 / CIP 106854 / NCIMB 13768 / 1H11).